Consider the following 239-residue polypeptide: Octanoyltransferase (239 aa).

Positions 48 to 236 (DGGDELVWLV…AFEAVFGETT (189 aa)) constitute a BPL/LPL catalytic domain. Substrate contacts are provided by residues 87-94 (RGGEYTYH), 167-169 (ALG), and 180-182 (GLS). Cysteine 198 functions as the Acyl-thioester intermediate in the catalytic mechanism.

This sequence belongs to the LipB family.

The protein localises to the cytoplasm. The enzyme catalyses octanoyl-[ACP] + L-lysyl-[protein] = N(6)-octanoyl-L-lysyl-[protein] + holo-[ACP] + H(+). It participates in protein modification; protein lipoylation via endogenous pathway; protein N(6)-(lipoyl)lysine from octanoyl-[acyl-carrier-protein]: step 1/2. Functionally, catalyzes the transfer of endogenously produced octanoic acid from octanoyl-acyl-carrier-protein onto the lipoyl domains of lipoate-dependent enzymes. Lipoyl-ACP can also act as a substrate although octanoyl-ACP is likely to be the physiological substrate. The protein is Octanoyltransferase of Rhizobium johnstonii (strain DSM 114642 / LMG 32736 / 3841) (Rhizobium leguminosarum bv. viciae).